The sequence spans 360 residues: Phospho-N-acetylmuramoyl-pentapeptide-transferase (360 aa).

Topologically, residues Met1 to Arg25 are periplasmic. The chain crosses the membrane as a helical span at residues Ala26 to Ala46. The Cytoplasmic segment spans residues His47–Thr71. The helical transmembrane segment at Pro72 to Tyr92 threads the bilayer. Residue Pro93 is a topological domain, periplasmic. Residues Ser94–Val114 traverse the membrane as a helical segment. The Cytoplasmic portion of the chain corresponds to Asp115 to Arg131. Residues Trp132–Gly152 form a helical membrane-spanning segment. The Periplasmic portion of the chain corresponds to Lys153–Asp167. The helical transmembrane segment at Val168–Gly188 threads the bilayer. Topologically, residues Asn189–Asp198 are cytoplasmic. The helical transmembrane segment at Gly199–Thr219 threads the bilayer. The Periplasmic segment spans residues Gly220–His235. A helical membrane pass occupies residues Ala236 to Phe256. The Cytoplasmic portion of the chain corresponds to Asn257–Gln262. A helical membrane pass occupies residues Val263 to Leu283. Residues Leu284–Glu287 are Periplasmic-facing. The chain crosses the membrane as a helical span at residues Phe288–Val308. Over Gly309–Arg337 the chain is Cytoplasmic. A helical membrane pass occupies residues Val338–Lys358. Topologically, residues Val359–Arg360 are periplasmic.

It belongs to the glycosyltransferase 4 family. MraY subfamily. Mg(2+) is required as a cofactor.

The protein localises to the cell inner membrane. It carries out the reaction UDP-N-acetyl-alpha-D-muramoyl-L-alanyl-gamma-D-glutamyl-meso-2,6-diaminopimeloyl-D-alanyl-D-alanine + di-trans,octa-cis-undecaprenyl phosphate = di-trans,octa-cis-undecaprenyl diphospho-N-acetyl-alpha-D-muramoyl-L-alanyl-D-glutamyl-meso-2,6-diaminopimeloyl-D-alanyl-D-alanine + UMP. It participates in cell wall biogenesis; peptidoglycan biosynthesis. Its function is as follows. Catalyzes the initial step of the lipid cycle reactions in the biosynthesis of the cell wall peptidoglycan: transfers peptidoglycan precursor phospho-MurNAc-pentapeptide from UDP-MurNAc-pentapeptide onto the lipid carrier undecaprenyl phosphate, yielding undecaprenyl-pyrophosphoryl-MurNAc-pentapeptide, known as lipid I. This Escherichia coli O157:H7 protein is Phospho-N-acetylmuramoyl-pentapeptide-transferase.